Consider the following 118-residue polypeptide: Elicitin (118 aa).

A signal peptide spans 1–20 (MNFRALFAATVAALVGSTSA). Cystine bridges form between cysteine 23/cysteine 91, cysteine 47/cysteine 76, and cysteine 71/cysteine 115.

It belongs to the elicitin family.

It is found in the secreted. Induces local and distal defense responses (incompatible hypersensitive reaction) in plants from the solanaceae and cruciferae families. Elicits leaf necrosis and causes the accumulation of pathogenesis-related proteins. Might interact with the lipidic molecules of the plasma membrane. This is Elicitin (PARA1) from Phytophthora nicotianae (Potato buckeye rot agent).